The chain runs to 363 residues: Phosphoserine aminotransferase (363 aa).

Residue R42 participates in L-glutamate binding. Pyridoxal 5'-phosphate is bound by residues A76–S77, W101, T151, D170, and Q193. Position 194 is an N6-(pyridoxal phosphate)lysine (K194). Position 234–235 (N234–T235) interacts with pyridoxal 5'-phosphate.

This sequence belongs to the class-V pyridoxal-phosphate-dependent aminotransferase family. SerC subfamily. As to quaternary structure, homodimer. It depends on pyridoxal 5'-phosphate as a cofactor.

The protein localises to the cytoplasm. The enzyme catalyses O-phospho-L-serine + 2-oxoglutarate = 3-phosphooxypyruvate + L-glutamate. It carries out the reaction 4-(phosphooxy)-L-threonine + 2-oxoglutarate = (R)-3-hydroxy-2-oxo-4-phosphooxybutanoate + L-glutamate. The protein operates within amino-acid biosynthesis; L-serine biosynthesis; L-serine from 3-phospho-D-glycerate: step 2/3. Functionally, catalyzes the reversible conversion of 3-phosphohydroxypyruvate to phosphoserine and of 3-hydroxy-2-oxo-4-phosphonooxybutanoate to phosphohydroxythreonine. This chain is Phosphoserine aminotransferase, found in Listeria monocytogenes serovar 1/2a (strain ATCC BAA-679 / EGD-e).